The chain runs to 126 residues: Sperm-specific H1/protamine-like protein type 2 (126 aa).

The 80-residue stretch at 5-84 (KKPTTLSMIV…GATGSFRVGK (80 aa)) folds into the H15 domain. The tract at residues 74-126 (SGATGSFRVGKAPASPKKAKKAKSPKKKSSKKSKNKSNNAKAKKSPKKKADSN) is disordered. Residues 90–120 (KKAKKAKSPKKKSSKKSKNKSNNAKAKKSPK) are compositionally biased toward basic residues.

OE2 and OE3 are produced by post-translational cleavage of a common precursor. As to expression, sperm.

It localises to the nucleus. The protein localises to the chromosome. Functionally, linker histones are implicated in chromatin remodeling and/or transcriptional regulation during spermiogenesis, the process of spermatid maturation into spermatozoa. Protamines substitute for histones in the chromatin of sperm during the haploid phase of spermatogenesis. They compact sperm DNA into a highly condensed, stable and inactive complex. The sequence is that of Sperm-specific H1/protamine-like protein type 2 from Ostrea edulis (Native oyster).